We begin with the raw amino-acid sequence, 162 residues long: NADH-quinone oxidoreductase subunit I (162 aa).

4Fe-4S ferredoxin-type domains are found at residues 52-82 (LRRY…IEAG) and 93-122 (VRYD…EGPN). Residues C62, C65, C68, C72, C102, C105, C108, and C112 each contribute to the [4Fe-4S] cluster site.

It belongs to the complex I 23 kDa subunit family. As to quaternary structure, NDH-1 is composed of 14 different subunits. Subunits NuoA, H, J, K, L, M, N constitute the membrane sector of the complex. Requires [4Fe-4S] cluster as cofactor.

It localises to the cell inner membrane. It catalyses the reaction a quinone + NADH + 5 H(+)(in) = a quinol + NAD(+) + 4 H(+)(out). Functionally, NDH-1 shuttles electrons from NADH, via FMN and iron-sulfur (Fe-S) centers, to quinones in the respiratory chain. The immediate electron acceptor for the enzyme in this species is believed to be ubiquinone. Couples the redox reaction to proton translocation (for every two electrons transferred, four hydrogen ions are translocated across the cytoplasmic membrane), and thus conserves the redox energy in a proton gradient. In Bradyrhizobium sp. (strain ORS 278), this protein is NADH-quinone oxidoreductase subunit I.